The chain runs to 526 residues: Protein ERGIC-53-like (526 aa).

The first 25 residues, Met-1–Thr-25, serve as a signal peptide directing secretion. Topologically, residues Gly-26–Gln-462 are lumenal. One can recognise an L-type lectin-like domain in the interval Arg-31 to Leu-252. Asn-75 carries an N-linked (GlcNAc...) asparagine glycan. A disulfide bridge connects residues Cys-176 and Cys-215. The helical transmembrane segment at Pro-463–Phe-483 threads the bilayer. At Arg-484–Ala-526 the chain is on the cytoplasmic side.

In terms of tissue distribution, highly expressed in normal and neoplastic prostate. Also expressed in cardiac atrium, salivary gland, spleen and selective cells in the CNS.

The protein localises to the endoplasmic reticulum-Golgi intermediate compartment membrane. The chain is Protein ERGIC-53-like (LMAN1L) from Homo sapiens (Human).